The chain runs to 530 residues: Hyccin 2 (530 aa).

Phosphothreonine occurs at positions 30 and 306. A phosphoserine mark is found at S321 and S341. A disordered region spans residues 328-404; it reads RREGAEGLNG…SNESPRDSVV (77 aa). The span at 353 to 373 shows a compositional bias: polar residues; sequence SGASLSSQPHGTKPPSSSQRG. A phosphoserine mark is found at S430, S442, S444, and S491. The tract at residues 502–530 is disordered; the sequence is EGKELLSPGAPLTKQSRSPSFNMQLISQV. Residues 514–530 show a composition bias toward polar residues; that stretch reads TKQSRSPSFNMQLISQV.

The protein belongs to the Hyccin family. In terms of assembly, component of a phosphatidylinositol 4-kinase (PI4K) complex, composed of PI4KA, EFR3 (EFR3A or EFR3B), TTC7 (TTC7A or TTC7B) and HYCC (HYCC1 or HYCC2). As to expression, expressed in the central nervous system. Expressed at much lower level in oligodendrocytes than in neurons.

Its subcellular location is the cytoplasm. It localises to the cytosol. The protein resides in the cell membrane. Component of a complex required to localize phosphatidylinositol 4-kinase (PI4K) to the plasma membrane. This Mus musculus (Mouse) protein is Hyccin 2 (Hycc2).